Consider the following 351-residue polypeptide: MQLKAKEELLRNMELGLIPDQEIRQLIRVELEKRLQWGYKETHEEQLSQLLDLVHSLKGMKMATEMENLDLKLYEAPMEFLKIQHGSNMKQSAGYYTDESTTLDEAEIAMLDLYMERAQIKDGQSVLDLGCGLGAVALFGANKFKKCQFTGVTSSVEQKDYIEGKCKELKLTNVKVLLADITTYETEERFDRIFAVELIEHMKNYQLLLKKISEWMKDDGLLFVEHVCHKTLAYHYEPVDAEDWYTNYIFPAGTLTLSSASMLLYFQDDVSVVNQWTLSGKHYSRSHEEWLKNMDKNIVEFKEIMRSITKTEKEAIKLLNFWRIFCMCGAELFGYKNGEEWMLTHLLFKKK.

S-adenosyl-L-methionine-binding positions include 91-92 (QS), 126-134 (VLDLGCGLG), 130-132 (GCG), and 153-158 (TSSVEQ). Cys-326 is an active-site residue.

It belongs to the CFA/CMAS family. As to expression, expressed in roots, stems, flower buds and at lower levels, in leaves. Restricted to sieve elements of the phloem adjacent or proximal to laticifers.

It is found in the cytoplasm. The catalysed reaction is (S)-coclaurine + S-adenosyl-L-methionine = (S)-N-methylcoclaurine + S-adenosyl-L-homocysteine + H(+). It functions in the pathway alkaloid biosynthesis; (S)-reticuline biosynthesis; (S)-reticuline from (S)-norcoclaurine: step 2/4. Involved in the biosynthesis of benzylisoquinoline alkaloids. N-methyltransferase methylating (S)-coclaurine. 4'-O-methylcoclaurine and norlaudanine can also be used as substrates. The polypeptide is (S)-coclaurine N-methyltransferase (Papaver somniferum (Opium poppy)).